An 878-amino-acid chain; its full sequence is Phosphoenolpyruvate carboxylase (878 aa).

Residues histidine 138 and lysine 545 contribute to the active site.

Belongs to the PEPCase type 1 family. The cofactor is Mg(2+).

The enzyme catalyses oxaloacetate + phosphate = phosphoenolpyruvate + hydrogencarbonate. In terms of biological role, forms oxaloacetate, a four-carbon dicarboxylic acid source for the tricarboxylic acid cycle. The chain is Phosphoenolpyruvate carboxylase from Shewanella sediminis (strain HAW-EB3).